The following is a 421-amino-acid chain: Histidine--tRNA ligase (421 aa).

It belongs to the class-II aminoacyl-tRNA synthetase family. As to quaternary structure, homodimer.

It localises to the cytoplasm. It carries out the reaction tRNA(His) + L-histidine + ATP = L-histidyl-tRNA(His) + AMP + diphosphate + H(+). This is Histidine--tRNA ligase from Coxiella burnetii (strain Dugway 5J108-111).